The following is a 187-amino-acid chain: Protein GrpE (187 aa).

The disordered stretch occupies residues 1-23 (MADEQNLDAQAQDQAAEAGAGEE). Residues 7 to 23 (LDAQAQDQAAEAGAGEE) are compositionally biased toward low complexity.

This sequence belongs to the GrpE family. As to quaternary structure, homodimer.

It localises to the cytoplasm. Participates actively in the response to hyperosmotic and heat shock by preventing the aggregation of stress-denatured proteins, in association with DnaK and GrpE. It is the nucleotide exchange factor for DnaK and may function as a thermosensor. Unfolded proteins bind initially to DnaJ; upon interaction with the DnaJ-bound protein, DnaK hydrolyzes its bound ATP, resulting in the formation of a stable complex. GrpE releases ADP from DnaK; ATP binding to DnaK triggers the release of the substrate protein, thus completing the reaction cycle. Several rounds of ATP-dependent interactions between DnaJ, DnaK and GrpE are required for fully efficient folding. The polypeptide is Protein GrpE (Pseudomonas savastanoi pv. phaseolicola (strain 1448A / Race 6) (Pseudomonas syringae pv. phaseolicola (strain 1448A / Race 6))).